Here is a 320-residue protein sequence, read N- to C-terminus: Malate dehydrogenase (320 aa).

NAD(+)-binding positions include 10 to 15 and aspartate 34; that span reads GAGQIG. 2 residues coordinate substrate: arginine 83 and arginine 89. NAD(+) contacts are provided by residues asparagine 96 and 119-121; that span reads ITN. Residues asparagine 121 and arginine 152 each coordinate substrate. Histidine 176 serves as the catalytic Proton acceptor.

It belongs to the LDH/MDH superfamily. MDH type 3 family.

It carries out the reaction (S)-malate + NAD(+) = oxaloacetate + NADH + H(+). Its function is as follows. Catalyzes the reversible oxidation of malate to oxaloacetate. In Beijerinckia indica subsp. indica (strain ATCC 9039 / DSM 1715 / NCIMB 8712), this protein is Malate dehydrogenase.